The sequence spans 842 residues: Leucine--tRNA ligase (842 aa).

The 'HIGH' region motif lies at 44-55 (PYPSANGLHVGH). Positions 619–623 (KMSKS) match the 'KMSKS' region motif. ATP is bound at residue Lys622.

The protein belongs to the class-I aminoacyl-tRNA synthetase family.

It localises to the cytoplasm. The catalysed reaction is tRNA(Leu) + L-leucine + ATP = L-leucyl-tRNA(Leu) + AMP + diphosphate. This is Leucine--tRNA ligase from Borrelia recurrentis (strain A1).